The primary structure comprises 167 residues: MKKLDVQIAIEADGWPDEAELEALSTRILDHAADFIAAEGQPFAPMPAEVSLVFTGDTEIQAINSEWRGQDKPTNVLSFPAYPIEPGDKPGPMLGDIVIARQTVEREAAELEKTITDHLTHLMVHGFLHLFGYDHMTEDEAEEMEGLETRILAGLGLSDPYAGQVPV.

Residues histidine 125, histidine 129, and histidine 135 each contribute to the Zn(2+) site.

Belongs to the endoribonuclease YbeY family. It depends on Zn(2+) as a cofactor.

It localises to the cytoplasm. Functionally, single strand-specific metallo-endoribonuclease involved in late-stage 70S ribosome quality control and in maturation of the 3' terminus of the 16S rRNA. This chain is Endoribonuclease YbeY, found in Allorhizobium ampelinum (strain ATCC BAA-846 / DSM 112012 / S4) (Agrobacterium vitis (strain S4)).